A 1072-amino-acid chain; its full sequence is 5'-3' exoribonuclease 2 (1072 aa).

The stretch at 118 to 144 (RRFRAAREAMEKEEDKQKFVELLKKQN) forms a coiled coil. The segment at 269–286 (RLCKICGQKGHDAMNCKG) adopts a CCHC-type zinc-finger fold. The span at 414-435 (KETEDRREAGFKRRKLADEARQ) shows a compositional bias: basic and acidic residues. 4 disordered regions span residues 414–459 (KETE…GFSF), 509–577 (QGTS…AEPT), 865–911 (ASRS…GGGG), and 943–1072 (GGGY…RGYR). The span at 518-543 (AESTETPAETAAAAPATEEQAAPPAA) shows a compositional bias: low complexity. The segment covering 892–911 (GPGGGQQGGRGRGGYQGGGG) has biased composition (gly residues). Residues 955–967 (GPPPGWQPPPPPG) show a composition bias toward pro residues. 3 stretches are compositionally biased toward gly residues: residues 983–1000 (AYGG…GSSR), 1025–1036 (YGQGGSRGGYQG), and 1056–1072 (GYRG…RGYR).

It belongs to the 5'-3' exonuclease family. XRN2/RAT1 subfamily. As to quaternary structure, interacts with rai1; the interaction is direct, stabilizes exr-1 protein structure and may stimulate its exoribonuclease activity. The interaction also stimulates rai1 pyrophosphohydrolase activity, probably by recruiting it to mRNA substrates.

It is found in the nucleus. Functionally, possesses 5'-&gt;3' exoribonuclease activity. Required for the processing of nuclear mRNA and rRNA precursors. May promote the termination of transcription by RNA polymerase II. Essential for vegetative cell growth and chromosome segregation. The polypeptide is 5'-3' exoribonuclease 2 (exr-1) (Neurospora crassa (strain ATCC 24698 / 74-OR23-1A / CBS 708.71 / DSM 1257 / FGSC 987)).